Consider the following 356-residue polypeptide: A-type ATP synthase subunit C (356 aa).

Belongs to the V-ATPase V0D/AC39 subunit family. In terms of assembly, has multiple subunits with at least A(3), B(3), C, D, E, F, H, I and proteolipid K(x).

It localises to the cell membrane. Component of the A-type ATP synthase that produces ATP from ADP in the presence of a proton gradient across the membrane. This chain is A-type ATP synthase subunit C, found in Thermoplasma acidophilum (strain ATCC 25905 / DSM 1728 / JCM 9062 / NBRC 15155 / AMRC-C165).